We begin with the raw amino-acid sequence, 284 residues long: Protein phosphatase 1 regulatory subunit 3B (284 aa).

Positions 61–64 match the PP1-binding motif motif; sequence RVSF. A CBM21 domain is found at 124-232; that stretch reads RNRLQTNHVC…SNKGKNYRIT (109 aa). Ser260 bears the Phosphoserine mark.

As to quaternary structure, interacts with glycogen, PPP1CC catalytic subunit of PP1 and PYGL. Associates with glycogen particles. Forms complexes with debranching enzyme, glycogen phosphorylase, glycogen synthase and phosphorylase kinase which is necessary for its regulation of PP1 activity. As to expression, highly expressed in liver. Moderately expressed in kidney, heart, testis, spleen and lung. Weakly expressed in skeletal muscle (at protein level). Expressed predominantly in liver. Expressed moderately in heart. Expressed weakly in lung, kidney, spleen and skeletal muscle.

Its function is as follows. Acts as a glycogen-targeting subunit for phosphatase PP1. Facilitates interaction of the PP1 with enzymes of the glycogen metabolism and regulates its activity. Suppresses the rate at which PP1 dephosphorylates (inactivates) glycogen phosphorylase and enhances the rate at which it activates glycogen synthase and therefore limits glycogen breakdown. Its activity is inhibited by PYGL, resulting in inhibition of the glycogen synthase and glycogen phosphorylase phosphatase activities of PP1. Dramatically increases basal and insulin-stimulated glycogen synthesis upon overexpression in hepatocytes. The protein is Protein phosphatase 1 regulatory subunit 3B (Ppp1r3b) of Rattus norvegicus (Rat).